The sequence spans 391 residues: Phosphoglycerate kinase (391 aa).

Substrate contacts are provided by residues 21-23 (DFN), Arg-41, 64-67 (HLGR), Arg-121, and Arg-154. ATP-binding positions include Lys-205, Glu-322, and 348–351 (GGDS).

The protein belongs to the phosphoglycerate kinase family. As to quaternary structure, monomer.

It is found in the cytoplasm. The enzyme catalyses (2R)-3-phosphoglycerate + ATP = (2R)-3-phospho-glyceroyl phosphate + ADP. Its pathway is carbohydrate degradation; glycolysis; pyruvate from D-glyceraldehyde 3-phosphate: step 2/5. This is Phosphoglycerate kinase from Solibacter usitatus (strain Ellin6076).